Consider the following 65-residue polypeptide: Large ribosomal subunit protein bL35 (65 aa).

Belongs to the bacterial ribosomal protein bL35 family.

The protein is Large ribosomal subunit protein bL35 of Synechococcus sp. (strain CC9605).